The following is a 344-amino-acid chain: S-methyl-5'-thioadenosine phosphorylase (344 aa).

Residues Thr45, 88–89 (RH), and 121–122 (SA) each bind phosphate. Met238 provides a ligand contact to substrate. Phosphate is bound at residue Ser239. 262 to 264 (DYD) is a substrate binding site.

The protein belongs to the PNP/MTAP phosphorylase family. MTAP subfamily. Homotrimer.

Its subcellular location is the cytoplasm. The protein resides in the nucleus. It carries out the reaction S-methyl-5'-thioadenosine + phosphate = 5-(methylsulfanyl)-alpha-D-ribose 1-phosphate + adenine. It functions in the pathway amino-acid biosynthesis; L-methionine biosynthesis via salvage pathway; S-methyl-5-thio-alpha-D-ribose 1-phosphate from S-methyl-5'-thioadenosine (phosphorylase route): step 1/1. In terms of biological role, catalyzes the reversible phosphorylation of S-methyl-5'-thioadenosine (MTA) to adenine and 5-methylthioribose-1-phosphate. Involved in the breakdown of MTA, a major by-product of polyamine biosynthesis. Responsible for the first step in the methionine salvage pathway after MTA has been generated from S-adenosylmethionine. Has broad substrate specificity with 6-aminopurine nucleosides as preferred substrates. The protein is S-methyl-5'-thioadenosine phosphorylase of Candida albicans (strain SC5314 / ATCC MYA-2876) (Yeast).